A 248-amino-acid polypeptide reads, in one-letter code: UDP-2,3-diacylglucosamine hydrolase (248 aa).

Residues D8, H10, D41, N79, and H114 each coordinate Mn(2+). A substrate-binding site is contributed by 79–80; it reads NR. Residues D122, N164, R167, and H195 each contribute to the substrate site. Mn(2+) contacts are provided by H195 and H197.

The protein belongs to the LpxH family. Requires Mn(2+) as cofactor.

It localises to the cell inner membrane. The catalysed reaction is UDP-2-N,3-O-bis[(3R)-3-hydroxytetradecanoyl]-alpha-D-glucosamine + H2O = 2-N,3-O-bis[(3R)-3-hydroxytetradecanoyl]-alpha-D-glucosaminyl 1-phosphate + UMP + 2 H(+). It participates in glycolipid biosynthesis; lipid IV(A) biosynthesis; lipid IV(A) from (3R)-3-hydroxytetradecanoyl-[acyl-carrier-protein] and UDP-N-acetyl-alpha-D-glucosamine: step 4/6. In terms of biological role, hydrolyzes the pyrophosphate bond of UDP-2,3-diacylglucosamine to yield 2,3-diacylglucosamine 1-phosphate (lipid X) and UMP by catalyzing the attack of water at the alpha-P atom. Involved in the biosynthesis of lipid A, a phosphorylated glycolipid that anchors the lipopolysaccharide to the outer membrane of the cell. This chain is UDP-2,3-diacylglucosamine hydrolase, found in Wigglesworthia glossinidia brevipalpis.